The chain runs to 613 residues: tRNA 5-methylaminomethyl-2-thiouridine biosynthesis bifunctional protein MnmC (613 aa).

The tRNA (mnm(5)s(2)U34)-methyltransferase stretch occupies residues 1–225; sequence MKKAKLIFKD…KREMIKAYLE (225 aa). Residues 252–613 are FAD-dependent cmnm(5)s(2)U34 oxidoreductase; the sequence is IGAGISSAVL…FLIRKLKKGL (362 aa).

This sequence in the N-terminal section; belongs to the methyltransferase superfamily. tRNA (mnm(5)s(2)U34)-methyltransferase family. The protein in the C-terminal section; belongs to the DAO family. It depends on FAD as a cofactor.

The protein localises to the cytoplasm. It carries out the reaction 5-aminomethyl-2-thiouridine(34) in tRNA + S-adenosyl-L-methionine = 5-methylaminomethyl-2-thiouridine(34) in tRNA + S-adenosyl-L-homocysteine + H(+). Functionally, catalyzes the last two steps in the biosynthesis of 5-methylaminomethyl-2-thiouridine (mnm(5)s(2)U) at the wobble position (U34) in tRNA. Catalyzes the FAD-dependent demodification of cmnm(5)s(2)U34 to nm(5)s(2)U34, followed by the transfer of a methyl group from S-adenosyl-L-methionine to nm(5)s(2)U34, to form mnm(5)s(2)U34. In Campylobacter jejuni subsp. jejuni serotype O:2 (strain ATCC 700819 / NCTC 11168), this protein is tRNA 5-methylaminomethyl-2-thiouridine biosynthesis bifunctional protein MnmC.